Here is a 79-residue protein sequence, read N- to C-terminus: Conotoxin VnMKLT1-01122 (79 aa).

An N-terminal signal peptide occupies residues 1–22 (MKLTCMKIVAVLFLTAWTFVTA). A propeptide spanning residues 23-48 (DDSRNGLEYLFPKAHYEMNPEASKLN) is cleaved from the precursor. A Pyrrolidone carboxylic acid modification is found at glutamine 51. 3 disulfides stabilise this stretch: cysteine 53–cysteine 70, cysteine 60–cysteine 74, and cysteine 69–cysteine 78.

The protein belongs to the conotoxin O1 superfamily. Expressed by the venom duct.

Its subcellular location is the secreted. This is Conotoxin VnMKLT1-01122 from Conus ventricosus (Mediterranean cone).